Reading from the N-terminus, the 315-residue chain is MLSSLAGKLQGKTKFLIDVLKFYDARMLKSSSMSGIGKRGDPYLVKVVQGRSRKHSIASAKDNHRYGEDSWFISSTPKAEVMGVADGVGGWSELGIDSGLFASELMFWCANYAKRESFDGRTPLDLLIESYSEIKGKTDPIVGSSTACLVSLNRRDCTMHSANLGDSGFLVIRNGRMLHRSEEQVHDFNAPYQLTVVPNERFDNVYCDRPELADSTRLPLQEGDLVLLATDGLFDNVPESLIVKTLGKYQGVTREEDLQSAANSLVHMAKDLSISPNFESPFALKAKAFEVDYPGGGKPDDITVILATVAVPQND.

The 256-residue stretch at 54 to 309 folds into the PPM-type phosphatase domain; it reads KHSIASAKDN…DDITVILATV (256 aa). The Mn(2+) site is built by Asp-86, Gly-87, and Asp-231.

It belongs to the PP2C family. Mg(2+) serves as cofactor. The cofactor is Mn(2+).

It carries out the reaction O-phospho-L-seryl-[protein] + H2O = L-seryl-[protein] + phosphate. The enzyme catalyses O-phospho-L-threonyl-[protein] + H2O = L-threonyl-[protein] + phosphate. This chain is Protein phosphatase PTC7 homolog fig, found in Drosophila willistoni (Fruit fly).